Reading from the N-terminus, the 247-residue chain is MRFLKTEAIVLKSNLISEKDKIATLFTRDYGKLQAVAKGARRSKSRFVNAVRPFIVANYVIFEGQNYYYIDQWELVKNFENIEKDLKKFALASYISETISRVLEEKQKNTKLYFFTKHSLEAVESLNVETSIFLFSYTLKLISLLGYMPVLDSCAVCGKKENLSYFSSSCGGAVCKDCNETCKDAKFLNKKVLKFLLYLLKAKYEKLERISVPGVIKEEADKIITEYVRTHLEMDFKSKDFAMKLSD.

This sequence belongs to the RecO family.

Its function is as follows. Involved in DNA repair and RecF pathway recombination. In Caldanaerobacter subterraneus subsp. tengcongensis (strain DSM 15242 / JCM 11007 / NBRC 100824 / MB4) (Thermoanaerobacter tengcongensis), this protein is DNA repair protein RecO.